The sequence spans 68 residues: DNA-directed RNA polymerase subunit omega (68 aa).

The protein belongs to the RNA polymerase subunit omega family. As to quaternary structure, the RNAP catalytic core consists of 2 alpha, 1 beta, 1 beta' and 1 omega subunit. When a sigma factor is associated with the core the holoenzyme is formed, which can initiate transcription.

It catalyses the reaction RNA(n) + a ribonucleoside 5'-triphosphate = RNA(n+1) + diphosphate. Its function is as follows. Promotes RNA polymerase assembly. Latches the N- and C-terminal regions of the beta' subunit thereby facilitating its interaction with the beta and alpha subunits. This chain is DNA-directed RNA polymerase subunit omega, found in Syntrophotalea carbinolica (strain DSM 2380 / NBRC 103641 / GraBd1) (Pelobacter carbinolicus).